Reading from the N-terminus, the 162-residue chain is Interleukin-15 (162 aa).

Positions 1–29 (MRISKPHLRSVSIQCYLCLLLNSHFLTEA) are cleaved as a signal peptide. Residues 30-48 (GIHVFILGCFSAGLPKTEA) constitute a propeptide that is removed on maturation. Intrachain disulfides connect C83–C133 and C90–C136. N-linked (GlcNAc...) asparagine glycosylation occurs at N127.

The protein belongs to the IL-15/IL-21 family.

The protein localises to the secreted. Functionally, cytokine that plays a major role in the development of inflammatory and protective immune responses to microbial invaders and parasites by modulating immune cells of both the innate and adaptive immune systems. Stimulates the proliferation of natural killer cells, T-cells and B-cells and promotes the secretion of several cytokines. In monocytes, induces the production of IL8 and monocyte chemotactic protein 1/CCL2, two chemokines that attract neutrophils and monocytes respectively to sites of infection. Unlike most cytokines, which are secreted in soluble form, IL15 is expressed in association with its high affinity IL15RA on the surface of IL15-producing cells and delivers signals to target cells that express IL2RB and IL2RG receptor subunits. Binding to its receptor triggers the phosphorylation of JAK1 and JAK3 and the recruitment and subsequent phosphorylation of signal transducer and activator of transcription-3/STAT3 and STAT5. In mast cells, induces the rapid tyrosine phosphorylation of STAT6 and thereby controls mast cell survival and release of cytokines such as IL4. The sequence is that of Interleukin-15 (IL15) from Macaca thibetana (Pere David's macaque).